We begin with the raw amino-acid sequence, 1533 residues long: DNA topoisomerase 2-alpha (1533 aa).

The residue at position 1 (Met1) is an N-acetylmethionine. Residues 1–22 are disordered; sequence MEVSPLQPVNENMQVNKTKKNE. A Phosphoserine modification is found at Ser4. Residues 7 to 16 are compositionally biased toward polar residues; the sequence is QPVNENMQVN. Lys17 participates in a covalent cross-link: Glycyl lysine isopeptide (Lys-Gly) (interchain with G-Cter in SUMO2). ATP-binding positions include Asn91, Asn120, and 148–150; that span reads SSN. Glycyl lysine isopeptide (Lys-Gly) (interchain with G-Cter in SUMO2) cross-links involve residues Lys156 and Lys157. Residue 161–168 participates in ATP binding; that stretch reads GRNGYGAK. Lys261 participates in a covalent cross-link: Glycyl lysine isopeptide (Lys-Gly) (interchain with G-Cter in SUMO2). Residue Thr282 is modified to Phosphothreonine. The tract at residues 342-344 is interaction with DNA; it reads KKK. A Glycyl lysine isopeptide (Lys-Gly) (interchain with G-Cter in SUMO2) cross-link involves residue Lys352. 376 to 378 is a binding site for ATP; it reads QTK. Residues Lys386, Lys397, Lys416, Lys418, Lys425, and Lys440 each participate in a glycyl lysine isopeptide (Lys-Gly) (interchain with G-Cter in SUMO2) cross-link. Residues 455 to 572 enclose the Toprim domain; that stretch reads CTLILTEGDS…SLLRHRFLEE (118 aa). Glu461 serves as a coordination point for Mg(2+). Residues Lys466, Lys480, and Lys529 each participate in a glycyl lysine isopeptide (Lys-Gly) (interchain with G-Cter in SUMO2) cross-link. Mg(2+) contacts are provided by Asp541 and Asp543. Glycyl lysine isopeptide (Lys-Gly) (interchain with G-Cter in SUMO2) cross-links involve residues Lys584, Lys599, Lys614, Lys622, Lys625, Lys632, Lys639, Lys655, Lys662, and Lys676. The Topo IIA-type catalytic domain maps to 715–1171; the sequence is IPSMVDGLKP…SPSDLWKEDL (457 aa). Catalysis depends on Tyr805, which acts as the O-(5'-phospho-DNA)-tyrosine intermediate. The interval 990 to 999 is interaction with DNA; sequence KLQTSLTCNS. Residue Lys1075 forms a Glycyl lysine isopeptide (Lys-Gly) (interchain with G-Cter in SUMO2) linkage. 2 disordered regions span residues 1090–1121 and 1183–1215; these read WKEA…VADS and AKEK…PSPC. Residues 1099–1108 are compositionally biased toward acidic residues; it reads DEEENEESDN. Phosphoserine; by CK1 is present on Ser1106. Glycyl lysine isopeptide (Lys-Gly) (interchain with G-Cter in SUMO2) cross-links involve residues Lys1114, Lys1196, and Lys1204. Residue Thr1205 is modified to Phosphothreonine. Position 1213 is a phosphoserine (Ser1213). Lys1228 is covalently cross-linked (Glycyl lysine isopeptide (Lys-Gly) (interchain with G-Cter in SUMO2)). The tract at residues 1231–1533 is disordered; it reads AEKKIKKKIK…LEESDEDDLF (303 aa). Lys1240 is covalently cross-linked (Glycyl lysine isopeptide (Lys-Gly) (interchain with G-Cter in SUMO1); alternate). Lys1240 participates in a covalent cross-link: Glycyl lysine isopeptide (Lys-Gly) (interchain with G-Cter in SUMO2); alternate. Position 1244 is a phosphothreonine (Thr1244). The residue at position 1247 (Ser1247) is a Phosphoserine. Residues 1256–1272 are compositionally biased toward basic and acidic residues; that stretch reads EGLKQRLEKKQKREPGT. Residues Lys1259, Lys1276, Lys1283, and Lys1286 each participate in a glycyl lysine isopeptide (Lys-Gly) (interchain with G-Cter in SUMO2) cross-link. Phosphoserine occurs at positions 1295, 1297, 1299, and 1302. Thr1327 is modified (phosphothreonine). A phosphoserine mark is found at Ser1332 and Ser1337. Residue Thr1343 is modified to Phosphothreonine. Residues Ser1351 and Ser1354 each carry the phosphoserine modification. The segment covering 1360-1371 has biased composition (basic and acidic residues); sequence TSPKHTNKEPKP. Glycyl lysine isopeptide (Lys-Gly) (interchain with G-Cter in SUMO2) cross-links involve residues Lys1363, Lys1367, and Lys1373. Ser1374 and Ser1377 each carry phosphoserine. Residue Lys1387 forms a Glycyl lysine isopeptide (Lys-Gly) (interchain with G-Cter in SUMO2) linkage. Phosphoserine is present on residues Ser1393 and Ser1395. The span at 1409–1433 shows a compositional bias: low complexity; sequence KPVSKKNVTVKKTAAKSQSSTSTTG. Residue Lys1424 forms a Glycyl lysine isopeptide (Lys-Gly) (interchain with G-Cter in SUMO2); alternate linkage. Residue Lys1424 is modified to N6-acetyllysine; alternate. The tract at residues 1435–1441 is interaction with PLSCR1; the sequence is KKRAAPK. Basic and acidic residues predominate over residues 1443–1455; the sequence is AKKDPDLDSDVSK. Lys1444 participates in a covalent cross-link: Glycyl lysine isopeptide (Lys-Gly) (interchain with G-Cter in SUMO2); alternate. Lys1444 bears the N6-acetyllysine; alternate mark. Phosphoserine is present on Ser1451. Glycyl lysine isopeptide (Lys-Gly) (interchain with G-Cter in SUMO2) cross-links involve residues Lys1456 and Lys1461. Ser1471 is subject to Phosphoserine. Thr1472 is subject to Phosphothreonine. Phosphoserine occurs at positions 1473, 1476, and 1478. Residues Lys1486 and Lys1494 each participate in a glycyl lysine isopeptide (Lys-Gly) (interchain with G-Cter in SUMO2) cross-link. The segment covering 1493–1504 has biased composition (basic and acidic residues); it reads PKGESDDFHLDL. A phosphoserine mark is found at Ser1497 and Ser1527.

It belongs to the type II topoisomerase family. As to quaternary structure, homodimer. Interacts with COPS5. Interacts with RECQL5; this stimulates DNA decatenation. Interacts with SETMAR; stimulates the topoisomerase activity. Interacts with DHX9; this interaction occurs in a E2 enzyme UBE2I- and RNA-dependent manner, negatively regulates DHX9-mediated double-stranded DNA and RNA duplex helicase activity and stimulates TOP2A-mediated supercoiled DNA relaxation activity. Interacts with HNRNPU (via C-terminus); this interaction protects the topoisomerase TOP2A from degradation and positively regulates the relaxation of supercoiled DNA in a RNA-dependent manner. Interacts with MCM3AP. Interacts with ERCC6. Interacts with PLSCR1. Interacts with GCNA; this interaction allows the resolution of topoisomerase II (TOP2A) DNA-protein cross-links. Interacts with POL1RA/RPA1 (via dock II) and UBTF in the context of Pol I complex; may assist Pol I transcription initiation by releasing supercoils occurring during DNA unwinding. Interacts with TPRN; TPRN interacts with a number of DNA damage response proteins, is recruited to sites of DNA damage and may play a role in DNA damage repair. Requires Mg(2+) as cofactor. The cofactor is Mn(2+). It depends on Ca(2+) as a cofactor. In terms of processing, phosphorylation has no effect on catalytic activity. However, phosphorylation at Ser-1106 by CSNK1D/CK1 promotes DNA cleavable complex formation.

Its subcellular location is the cytoplasm. It localises to the nucleus. The protein resides in the nucleoplasm. The protein localises to the nucleolus. The catalysed reaction is ATP-dependent breakage, passage and rejoining of double-stranded DNA.. Key decatenating enzyme that alters DNA topology by binding to two double-stranded DNA molecules, generating a double-stranded break in one of the strands, passing the intact strand through the broken strand, and religating the broken strand. May play a role in regulating the period length of BMAL1 transcriptional oscillation. The sequence is that of DNA topoisomerase 2-alpha (TOP2A) from Sus scrofa (Pig).